The following is a 245-amino-acid chain: S-methyl-5'-thioinosine phosphorylase (245 aa).

Residues threonine 10 and 52 to 53 contribute to the phosphate site; that span reads RH. Methionine 185 serves as a coordination point for substrate. Threonine 186 serves as a coordination point for phosphate. Residue 209–211 participates in substrate binding; that stretch reads NPA.

This sequence belongs to the PNP/MTAP phosphorylase family. MTAP subfamily. Homotrimer.

It carries out the reaction S-methyl-5'-thioinosine + phosphate = 5-(methylsulfanyl)-alpha-D-ribose 1-phosphate + hypoxanthine. It participates in purine metabolism; purine nucleoside salvage. Catalyzes the reversible phosphorylation of S-methyl-5'-thioinosine (MTI) to hypoxanthine and 5-methylthioribose-1-phosphate. Involved in the breakdown of S-methyl-5'-thioadenosine (MTA), a major by-product of polyamine biosynthesis. Catabolism of (MTA) occurs via deamination to MTI and phosphorolysis to hypoxanthine. Involved in quorum sensing. This is S-methyl-5'-thioinosine phosphorylase from Pseudomonas aeruginosa (strain ATCC 15692 / DSM 22644 / CIP 104116 / JCM 14847 / LMG 12228 / 1C / PRS 101 / PAO1).